The primary structure comprises 355 residues: Guanine nucleotide-binding protein G(i) subunit alpha-2 (355 aa).

A lipid anchor (N-myristoyl glycine) is attached at Gly-2. Cys-3 carries S-palmitoyl cysteine lipidation. The region spanning 32 to 355 is the G-alpha domain; that stretch reads REVKLLLLGA…KNNLKDCGLF (324 aa). Positions 35–48 are G1 motif; the sequence is KLLLLGAGESGKST. Residues 40-47, 176-182, 201-205, 270-273, and Ala-327 each bind GTP; these read GAGESGKS, LRTRVKT, DVGGQ, and NKKD. Ser-47 provides a ligand contact to Mg(2+). The G2 motif stretch occupies residues 174–182; that stretch reads DVLRTRVKT. The residue at position 179 (Arg-179) is an ADP-ribosylarginine; by cholera toxin. Thr-182 is a Mg(2+) binding site. The segment at 197–206 is G3 motif; the sequence is FKMFDVGGQR. The residue at position 205 (Gln-205) is a Deamidated glutamine; by Photorhabdus PAU_02230. Residues 266-273 form a G4 motif region; that stretch reads ILFLNKKD. The G5 motif stretch occupies residues 325–330; that stretch reads TCATDT. Cys-352 bears the ADP-ribosylcysteine; by pertussis toxin mark.

The protein belongs to the G-alpha family. G(i/o/t/z) subfamily. As to quaternary structure, g proteins are composed of 3 units; alpha, beta and gamma. The alpha chain contains the guanine nucleotide binding site. In this context, interacts with GNB2. Interacts with GPSM1. Interacts with RGS12 and RGS14. Interacts with UNC5B. Interacts (inactive GDP-bound form) with NUCB1 (via GBA motif); the interaction leads to activation of GNAI3. Interacts (inactive GDP-bound form) with CCDC88C/DAPLE (via GBA motif). Interacts (inactive GDP-bound form) with CCDC8A/GIV (via GBA motif). Interacts with CXCR1 and CXCR2. In terms of processing, (Microbial infection) Deamidated at Gln-205 by Photorhabdus asymbiotica toxin PAU_02230, blocking GTP hydrolysis of heterotrimeric GNAQ or GNA11 and G-alphai (GNAI1, GNAI2 or GNAI3) proteins, thereby activating RhoA.

It is found in the cytoplasm. The protein localises to the cytoskeleton. The protein resides in the microtubule organizing center. It localises to the centrosome. Its subcellular location is the cell membrane. It is found in the membrane. Its function is as follows. Guanine nucleotide-binding proteins (G proteins) are involved as modulators or transducers in various transmembrane signaling systems. The G(i) proteins are involved in hormonal regulation of adenylate cyclase: they inhibit the cyclase in response to beta-adrenergic stimuli. May play a role in cell division. In terms of biological role, regulates the cell surface density of dopamine receptors DRD2 by sequestrating them as an intracellular pool. This is Guanine nucleotide-binding protein G(i) subunit alpha-2 (GNAI2) from Homo sapiens (Human).